The following is a 337-amino-acid chain: Adenine deaminase (337 aa).

Zn(2+)-binding residues include His14, His16, and His194. The Proton donor role is filled by Glu197. A Zn(2+)-binding site is contributed by Asp275. Asp276 contributes to the substrate binding site.

Belongs to the metallo-dependent hydrolases superfamily. Adenosine and AMP deaminases family. Adenine deaminase type 2 subfamily. The cofactor is Zn(2+).

The catalysed reaction is adenine + H2O + H(+) = hypoxanthine + NH4(+). In terms of biological role, catalyzes the hydrolytic deamination of adenine to hypoxanthine. Plays an important role in the purine salvage pathway and in nitrogen catabolism. This is Adenine deaminase from Vibrio parahaemolyticus serotype O3:K6 (strain RIMD 2210633).